The sequence spans 338 residues: Lipoate-protein ligase A (338 aa).

Residues 29–216 (DPNQRVLFLW…AFFAHYGARV (188 aa)) form the BPL/LPL catalytic domain. ATP contacts are provided by residues Arg71, 76 to 79 (GAVF), and Lys134. Lys134 is a (R)-lipoate binding site.

Belongs to the LplA family. In terms of assembly, monomer.

Its subcellular location is the cytoplasm. The enzyme catalyses L-lysyl-[lipoyl-carrier protein] + (R)-lipoate + ATP = N(6)-[(R)-lipoyl]-L-lysyl-[lipoyl-carrier protein] + AMP + diphosphate + H(+). Its pathway is protein modification; protein lipoylation via exogenous pathway; protein N(6)-(lipoyl)lysine from lipoate: step 1/2. It participates in protein modification; protein lipoylation via exogenous pathway; protein N(6)-(lipoyl)lysine from lipoate: step 2/2. Its function is as follows. Catalyzes both the ATP-dependent activation of exogenously supplied lipoate to lipoyl-AMP and the transfer of the activated lipoyl onto the lipoyl domains of lipoate-dependent enzymes. The sequence is that of Lipoate-protein ligase A from Aeromonas salmonicida (strain A449).